The sequence spans 123 residues: Small ribosomal subunit protein uS12 (123 aa).

Residues 1–23 (MPTISQLVKKGREKVEKKTKSPA) are disordered. Aspartate 89 bears the 3-methylthioaspartic acid mark.

The protein belongs to the universal ribosomal protein uS12 family. As to quaternary structure, part of the 30S ribosomal subunit. Contacts proteins S8 and S17. May interact with IF1 in the 30S initiation complex.

With S4 and S5 plays an important role in translational accuracy. Its function is as follows. Interacts with and stabilizes bases of the 16S rRNA that are involved in tRNA selection in the A site and with the mRNA backbone. Located at the interface of the 30S and 50S subunits, it traverses the body of the 30S subunit contacting proteins on the other side and probably holding the rRNA structure together. The combined cluster of proteins S8, S12 and S17 appears to hold together the shoulder and platform of the 30S subunit. This chain is Small ribosomal subunit protein uS12, found in Thermodesulfovibrio yellowstonii (strain ATCC 51303 / DSM 11347 / YP87).